The primary structure comprises 194 residues: Fe/S biogenesis protein NfuA (194 aa).

2 residues coordinate [4Fe-4S] cluster: cysteine 151 and cysteine 154.

This sequence belongs to the NfuA family. Homodimer. The cofactor is [4Fe-4S] cluster.

In terms of biological role, involved in iron-sulfur cluster biogenesis. Binds a 4Fe-4S cluster, can transfer this cluster to apoproteins, and thereby intervenes in the maturation of Fe/S proteins. Could also act as a scaffold/chaperone for damaged Fe/S proteins. This Actinobacillus succinogenes (strain ATCC 55618 / DSM 22257 / CCUG 43843 / 130Z) protein is Fe/S biogenesis protein NfuA.